Reading from the N-terminus, the 953-residue chain is MNQEYIKVRGAKEHNLKNINVDIPRNKFVVITGLSGSGKSSLAFDTIYAEGQRRYVESLSSYARQFLHLQNKPNVESISGLSPAIAIDQKTTSKNPRSTVGTITEIYDYLRLLYARVGIPYSPATGLPIHSQTVSEMVDIINELPQGTKIYLLAPIVRGHKGEFKREIMNLKKQGFQKLIVNGETCEIDDLPKLDKNKKHNIEVIVDRIVLDENLGNRLADSLESSLNLADGITYLEIVELPTAANTEYEKNQRITFSEKYSCPVSGFQLTEIEPRIFSFNSPFGACPKCEGIGKEFFFDRDLIVPDHRISIKDGAIVPWGSTSSKFILETLKALAEHYRFSIESPFSALSDNIKTILFEGSGEEAIRFEFHDGSKTQVIHQPFAGIIPSLQEKDRTIESVLIKEELAKFKSEHKCTACNGYRLKDEALCVKIVNIHIGEVADMSIATLQQWFAHLEQKLNKKQLFIAERILKEINERLKFLMNVGLDYLTLSRESGTLSGGESQRIRLASQIGSGLSGVLYVLDEPSIGLHQRDNTRLIETLKRLRDLGNTVLVVEHDEETMYEADHIIDIGPGAGIHGGRVIAEGNAEEIKNFEESITGRYLSGRQTIKVPTQTRTGHDNRAIELIGAVSNNLDNVDIKIPLGTFTAITGVSGSGKSSLMIHTLYKAALKHLEPTAKVFPGKYQKLKGLEYIDKIIDINQSPIGRTPRSNPATYTGAFTHIRDWFVELPESKARGYKVGRFSFNVKGGRCEACQGDGLIKIEMHFLPDVYVKCDICNGHRYNRETLEIKYKGKSIADILMMTVEDAMQFFEKIPLIYEKLITLNEVGLGYIKIGQSATTLSGGEAQRVKLAKELSRRSTGKTLYILDEPTTGLHIDDINKLLKVLHKLVDMGNTVLVIEHNLDVIKTADYIIDVGPEGGDKGGKIVVHGTPADIAACSESHTGRYLKQYLK.

Residue 33–40 (GLSGSGKS) participates in ATP binding. 2 ABC transporter domains span residues 320 to 599 (WGST…EESI) and 619 to 949 (GHDN…RYLK). ATP is bound at residue 652–659 (GVSGSGKS). The segment at 752–778 (CEACQGDGLIKIEMHFLPDVYVKCDIC) adopts a C4-type zinc-finger fold.

The protein belongs to the ABC transporter superfamily. UvrA family. Forms a heterotetramer with UvrB during the search for lesions.

Its subcellular location is the cytoplasm. The UvrABC repair system catalyzes the recognition and processing of DNA lesions. UvrA is an ATPase and a DNA-binding protein. A damage recognition complex composed of 2 UvrA and 2 UvrB subunits scans DNA for abnormalities. When the presence of a lesion has been verified by UvrB, the UvrA molecules dissociate. The chain is UvrABC system protein A from Rickettsia bellii (strain RML369-C).